A 335-amino-acid polypeptide reads, in one-letter code: Ornithine carbamoyltransferase (335 aa).

Residues 56 to 59 (STRT), Gln83, Arg107, and 134 to 137 (HPTQ) contribute to the carbamoyl phosphate site. L-ornithine-binding positions include Asn168, Asp232, and 236–237 (SM). Carbamoyl phosphate contacts are provided by residues 274–275 (CL) and Arg320.

It belongs to the aspartate/ornithine carbamoyltransferase superfamily. OTCase family.

The protein localises to the cytoplasm. It carries out the reaction carbamoyl phosphate + L-ornithine = L-citrulline + phosphate + H(+). It participates in amino-acid biosynthesis; L-arginine biosynthesis; L-arginine from L-ornithine and carbamoyl phosphate: step 1/3. In terms of biological role, reversibly catalyzes the transfer of the carbamoyl group from carbamoyl phosphate (CP) to the N(epsilon) atom of ornithine (ORN) to produce L-citrulline. The protein is Ornithine carbamoyltransferase of Yersinia pseudotuberculosis serotype I (strain IP32953).